Here is a 235-residue protein sequence, read N- to C-terminus: uncharacterized protein (235 aa).

Disordered regions lie at residues 1 to 36 and 213 to 235; these read MGML…GRGS and VKTR…ILEQ.

This is an uncharacterized protein from Homo sapiens (Human).